Here is a 346-residue protein sequence, read N- to C-terminus: Large ribosomal subunit protein uL3 (346 aa).

The segment at 324–346 (RPPKKKPPVERPQITYVSRESKQ) is disordered.

The protein belongs to the universal ribosomal protein uL3 family. As to quaternary structure, part of the 50S ribosomal subunit. Forms a cluster with proteins L14 and L24e.

Its function is as follows. One of the primary rRNA binding proteins, it binds directly near the 3'-end of the 23S rRNA, where it nucleates assembly of the 50S subunit. The sequence is that of Large ribosomal subunit protein uL3 from Thermococcus kodakarensis (strain ATCC BAA-918 / JCM 12380 / KOD1) (Pyrococcus kodakaraensis (strain KOD1)).